The chain runs to 632 residues: tRNA uridine 5-carboxymethylaminomethyl modification enzyme MnmG (632 aa).

FAD is bound by residues 15-20, isoleucine 127, and serine 182; that span reads GAGHAG. Residue 276 to 290 coordinates NAD(+); the sequence is GPRYCPSIEDKIVRF. Glutamine 373 serves as a coordination point for FAD.

Belongs to the MnmG family. In terms of assembly, homodimer. Heterotetramer of two MnmE and two MnmG subunits. FAD serves as cofactor.

The protein resides in the cytoplasm. Functionally, NAD-binding protein involved in the addition of a carboxymethylaminomethyl (cmnm) group at the wobble position (U34) of certain tRNAs, forming tRNA-cmnm(5)s(2)U34. The sequence is that of tRNA uridine 5-carboxymethylaminomethyl modification enzyme MnmG from Streptococcus pyogenes serotype M3 (strain SSI-1).